Consider the following 630-residue polypeptide: uncharacterized protein (630 aa).

The next 4 helical transmembrane spans lie at 254–274, 504–524, 564–584, and 601–621; these read MFYA…ELRV, IALL…LTSI, MIFA…SMVF, and IIVI…AVLF.

It localises to the cell membrane. This is an uncharacterized protein from Mycoplasma genitalium (strain ATCC 33530 / DSM 19775 / NCTC 10195 / G37) (Mycoplasmoides genitalium).